Consider the following 532-residue polypeptide: uncharacterized protein (532 aa).

The next 6 helical transmembrane spans lie at 7–26 (HSSYFSLFLIVALGFMLGRI), 30–52 (GLSLDVSAVIFIALLFGHFGVII), 59–77 (FGLVLFIFTIGIQAGPGFF), 87–109 (LIIITMLIISSACLTAVGLKYAF), 116–134 (VVGLVAGALTSTPGLAVAI), and 139–161 (SPLASIAYGIAYPFGVIGVILFV). 2 RCK C-terminal domains span residues 179–262 (LEIE…LVGE) and 263–346 (REEG…LLGN). 4 consecutive transmembrane segments (helical) span residues 356–378 (FFPIAMGIVLGVLFGKLNISFPG), 388–410 (GGVLMVALLLSAIGKTGPILWSM), 446–468 (GLLLFGVGAAITLVPMLIAAFVG), and 509–531 (YATVYPIAMVFLILFIQVIATVV).

The protein belongs to the AAE transporter (TC 2.A.81) family.

The protein localises to the cell membrane. This is an uncharacterized protein from Bacteroides fragilis (strain YCH46).